The sequence spans 272 residues: Bis(5'-nucleosyl)-tetraphosphatase, symmetrical (272 aa).

Belongs to the Ap4A hydrolase family.

It catalyses the reaction P(1),P(4)-bis(5'-adenosyl) tetraphosphate + H2O = 2 ADP + 2 H(+). Functionally, hydrolyzes diadenosine 5',5'''-P1,P4-tetraphosphate to yield ADP. In Shewanella frigidimarina (strain NCIMB 400), this protein is Bis(5'-nucleosyl)-tetraphosphatase, symmetrical.